The sequence spans 329 residues: MQSAVNEFLTPRHIDVTELGPTRAKVVLEPLERGFGHTLGNALRRILLSSMPGCAVTEVEIDGVQHEYSAIEGVQEDVIEILLNLKNVAVVMHGKDQAVLSLSKQGPGAVTAGDIQVDHDIEIKNPELVIANITSDTSLSMRLTVSRGRGYQPVDARATDEDETRAIGRLQLDASFSPVRRLAYSVESARVEQRTDLDKLVLDLETNGTIDPEEAIRRAATILQQQLAVFVDLEGEKEAEPEQKEDQIDPVLLRPVDDLELTVRSANCLKAENIYYIGDLIQRTEVELLKTPNLGKKSLTEIKDILASRGLSLGMRLENWPPASLKNND.

Positions 1 to 234 are alpha N-terminal domain (alpha-NTD); it reads MQSAVNEFLT…QQLAVFVDLE (234 aa). The interval 248-329 is alpha C-terminal domain (alpha-CTD); sequence IDPVLLRPVD…WPPASLKNND (82 aa).

Belongs to the RNA polymerase alpha chain family. Homodimer. The RNAP catalytic core consists of 2 alpha, 1 beta, 1 beta' and 1 omega subunit. When a sigma factor is associated with the core the holoenzyme is formed, which can initiate transcription.

It carries out the reaction RNA(n) + a ribonucleoside 5'-triphosphate = RNA(n+1) + diphosphate. Functionally, DNA-dependent RNA polymerase catalyzes the transcription of DNA into RNA using the four ribonucleoside triphosphates as substrates. This Saccharophagus degradans (strain 2-40 / ATCC 43961 / DSM 17024) protein is DNA-directed RNA polymerase subunit alpha.